We begin with the raw amino-acid sequence, 302 residues long: Pantothenate synthetase (302 aa).

30–37 serves as a coordination point for ATP; that stretch reads MGALHGGH. Catalysis depends on His-37, which acts as the Proton donor. Position 61 (Gln-61) interacts with (R)-pantoate. Gln-61 is a binding site for beta-alanine. 147 to 150 contacts ATP; that stretch reads GEKD. Gln-153 is a (R)-pantoate binding site. Residues Val-176 and 184-187 contribute to the ATP site; that span reads KSSR.

Belongs to the pantothenate synthetase family. As to quaternary structure, homodimer.

The protein resides in the cytoplasm. It carries out the reaction (R)-pantoate + beta-alanine + ATP = (R)-pantothenate + AMP + diphosphate + H(+). It participates in cofactor biosynthesis; (R)-pantothenate biosynthesis; (R)-pantothenate from (R)-pantoate and beta-alanine: step 1/1. Catalyzes the condensation of pantoate with beta-alanine in an ATP-dependent reaction via a pantoyl-adenylate intermediate. This chain is Pantothenate synthetase, found in Shouchella clausii (strain KSM-K16) (Alkalihalobacillus clausii).